The sequence spans 105 residues: MKVRKGDTVLVISGKDKGAKGKVLVAYPDRNKVLVEGVNRIKKHTAESRTERGAASGGIVTQEAPISVSNVMLLDSDGKPTRVGYRKDDETGKNVRIAKSNGKDL.

Basic and acidic residues predominate over residues 77–93 (DGKPTRVGYRKDDETGK). Residues 77–105 (DGKPTRVGYRKDDETGKNVRIAKSNGKDL) form a disordered region.

The protein belongs to the universal ribosomal protein uL24 family. As to quaternary structure, part of the 50S ribosomal subunit.

In terms of biological role, one of two assembly initiator proteins, it binds directly to the 5'-end of the 23S rRNA, where it nucleates assembly of the 50S subunit. Functionally, one of the proteins that surrounds the polypeptide exit tunnel on the outside of the subunit. This is Large ribosomal subunit protein uL24 from Mycolicibacterium gilvum (strain PYR-GCK) (Mycobacterium gilvum (strain PYR-GCK)).